The following is a 431-amino-acid chain: MPPILQRLQQATKMMSRRKILLLVLGCSTVSLLIHQGAQLSWYPKLFPLSCPPLRNSPPRPKHMTVAFLKTHKTAGTTVQNILFRFAERHNLTVALPHPSCEHQFCYPRNFSAHFVHPATRPPHVLASHLRFDRAELERLMPPSTVYVTILREPAAMFESLFSYYNQYCPAFRRVPNASLEAFLRAPEAYYRAGEHFAMFAHNTLAYDLGGDNERSPRDDAAYLAGLIRQVEEVFSLVMIAEYFDESLVLLRRLLAWDLDDVLYAKLNARAASSRLAAIPAALARAARTWNALDAGLYDHFNATFWRHVARAGRACVEREARELREARQRLLRRCFGDEPLLRPAAQIRTKQLQPWQPSRKVDIMGYDLPGGGAGPATEACLKLAMPEVQYSNYLLRKQKRRGGARARPEPVLDNPPPRPIRVLPRGPQGP.

Residues 1-19 (MPPILQRLQQATKMMSRRK) lie on the Cytoplasmic side of the membrane. The chain crosses the membrane as a helical; Signal-anchor for type II membrane protein span at residues 20–40 (ILLLVLGCSTVSLLIHQGAQL). Residues 41 to 431 (SWYPKLFPLS…RVLPRGPQGP (391 aa)) are Lumenal-facing. Residues Asn-91, Asn-110, Asn-177, and Asn-302 are each glycosylated (N-linked (GlcNAc...) asparagine). The segment at 399–431 (QKRRGGARARPEPVLDNPPPRPIRVLPRGPQGP) is disordered.

Belongs to the galactose-3-O-sulfotransferase family. Requires Mg(2+) as cofactor. Highly expressed in thyroid, brain, kidney, heart and spinal cord.

The protein localises to the golgi apparatus. It is found in the golgi stack membrane. The protein operates within protein modification; carbohydrate sulfation. In terms of biological role, transfers a sulfate to position 3 of non-reducing beta-galactosyl residues in N-glycans and core2-branched O-glycans. Has high activity towards Gal-beta-1,4-GlcNAc, Gal-beta-1,4(Fuc-alpha-1,3)GlcNAc and lower activity towards Gal-beta-1,3(Fuc-alpha-1,4)GlcNAc. In Homo sapiens (Human), this protein is Galactose-3-O-sulfotransferase 3 (GAL3ST3).